The primary structure comprises 1423 residues: Protein Shroom2 (1423 aa).

Residues 1-101 (MRPSTVTSRI…PDHTLPKADA (101 aa)) are disordered. The segment covering 8-27 (SRIWWSESSSSSSHDLSGSW) has biased composition (low complexity). Polar residues-rich tracts occupy residues 28–69 (EHTS…NSSI) and 83–93 (GSFSTCSSTPD). S103 is modified (phosphoserine). The disordered stretch occupies residues 116-171 (ASRPGSSRQSQSTGDPQGLQDRPSSFLPRVPGNSSKSPRPEDNIEPKIATSGRSNF). Residues 119-130 (PGSSRQSQSTGD) are compositionally biased toward polar residues. S185, S197, and S291 each carry phosphoserine. Disordered stretches follow at residues 300–357 (SYHG…VNQK), 586–630 (TSFQ…SAPR), 758–855 (EILS…SGGQ), 872–930 (PSSS…KLTD), and 1045–1085 (VETP…KEKT). Residues 575-677 (LKEAQTRVLK…SEPEKINEVG (103 aa)) form the ASD1 domain. The segment covering 761 to 771 (SEDRKVEKASE) has biased composition (basic and acidic residues). 4 positions are modified to phosphoserine: S806, S830, S831, and S833. Residue T834 is modified to Phosphothreonine. Over residues 872–885 (PSSSVLSSAQPQDS) the composition is skewed to low complexity. The segment covering 891-923 (DPTSPQPEAQLSSKCQHLQTSTMETSRSPSPQF) has biased composition (polar residues). 2 positions are modified to phosphoserine: S918 and S920. Pro residues predominate over residues 1054 to 1065 (PEPQPPSTPAPP). Residues S1072 and S1329 each carry the phosphoserine modification. The ASD2 domain maps to 1092 to 1418 (EELAREIVGK…QLKCLFDSLQ (327 aa)).

It belongs to the shroom family. As to quaternary structure, interacts with F-actin.

The protein resides in the apical cell membrane. It is found in the cell junction. It localises to the tight junction. The protein localises to the cytoplasm. Its subcellular location is the cytoskeleton. In terms of biological role, may be involved in endothelial cell morphology changes during cell spreading. In the retinal pigment epithelium, may regulate the biogenesis of melanosomes and promote their association with the apical cell surface by inducing gamma-tubulin redistribution. The chain is Protein Shroom2 (Shroom2) from Rattus norvegicus (Rat).